Reading from the N-terminus, the 494-residue chain is Alpha-amylase-related protein (494 aa).

Residues 1-20 (MIKFALALTLCLAGASLSLA) form the signal peptide. Glutamine 21 is modified (pyrrolidone carboxylic acid). A disulfide bridge links cysteine 48 with cysteine 104. Ca(2+) contacts are provided by asparagine 118, glutamine 169, and aspartate 178. Cysteine 157 and cysteine 171 are disulfide-bonded. Arginine 206 contacts chloride. Aspartate 208 (nucleophile) is an active-site residue. Histidine 212 is a Ca(2+) binding site. The active-site Proton donor is glutamate 245. 2 residues coordinate chloride: asparagine 308 and arginine 343. 3 disulfide bridges follow: cysteine 376/cysteine 382, cysteine 418/cysteine 441, and cysteine 448/cysteine 460.

The protein belongs to the glycosyl hydrolase 13 family. In terms of assembly, monomer. Requires Ca(2+) as cofactor. Chloride serves as cofactor.

It is found in the secreted. It carries out the reaction Endohydrolysis of (1-&gt;4)-alpha-D-glucosidic linkages in polysaccharides containing three or more (1-&gt;4)-alpha-linked D-glucose units.. The chain is Alpha-amylase-related protein (Amyrel) from Drosophila bakoue (Fruit fly).